The chain runs to 879 residues: Beta-mannosidase (879 aa).

Positions 1–17 (MLLRLLLLLAPCGAGFA) are cleaved as a signal peptide. 2 N-linked (GlcNAc...) asparagine glycosylation sites follow: Asn35 and Asn77. A disulfide bond links Cys167 and Cys176. 190–192 (WDW) is a binding site for substrate. N-linked (GlcNAc...) asparagine glycosylation is present at Asn297. Residue Asn456 coordinates substrate. Glu457 acts as the Proton donor in catalysis. 3 cysteine pairs are disulfide-bonded: Cys540–Cys629, Cys732–Cys761, and Cys764–Cys769. Catalysis depends on Glu554, which acts as the Nucleophile. The N-linked (GlcNAc...) asparagine glycan is linked to Asn803.

Belongs to the glycosyl hydrolase 2 family. In terms of assembly, monomer. In terms of processing, N-glycosylated. In terms of tissue distribution, detected in kidney (at protein level). Found in spleen and to a lesser extent in liver. Not detected in kidney or brain.

It is found in the lysosome. The catalysed reaction is Hydrolysis of terminal, non-reducing beta-D-mannose residues in beta-D-mannosides.. Its pathway is glycan metabolism; N-glycan degradation. In terms of biological role, exoglycosidase that cleaves the single beta-linked mannose residue from the non-reducing end of all N-linked glycoprotein oligosaccharides. This Capra hircus (Goat) protein is Beta-mannosidase (MANBA).